Here is a 368-residue protein sequence, read N- to C-terminus: tRNA-specific 2-thiouridylase MnmA (368 aa).

ATP is bound by residues Gly-11 to Ser-18 and Met-37. An interaction with target base in tRNA region spans residues Asn-97 to Asp-99. Cys-102 serves as the catalytic Nucleophile. Residues Cys-102 and Cys-199 are joined by a disulfide bond. ATP is bound at residue Gly-127. The segment at Lys-149 to Gln-151 is interaction with tRNA. Cys-199 acts as the Cysteine persulfide intermediate in catalysis. The segment at Arg-311–Tyr-312 is interaction with tRNA.

It belongs to the MnmA/TRMU family. As to quaternary structure, interacts with TusE.

Its subcellular location is the cytoplasm. It catalyses the reaction S-sulfanyl-L-cysteinyl-[protein] + uridine(34) in tRNA + AH2 + ATP = 2-thiouridine(34) in tRNA + L-cysteinyl-[protein] + A + AMP + diphosphate + H(+). In terms of biological role, catalyzes the 2-thiolation of uridine at the wobble position (U34) of tRNA(Lys), tRNA(Glu) and tRNA(Gln), leading to the formation of s(2)U34, the first step of tRNA-mnm(5)s(2)U34 synthesis. Sulfur is provided by IscS, via a sulfur-relay system. Binds ATP and its substrate tRNAs. In Salmonella typhimurium (strain LT2 / SGSC1412 / ATCC 700720), this protein is tRNA-specific 2-thiouridylase MnmA.